A 219-amino-acid polypeptide reads, in one-letter code: MNKEKAIVVFSGGQDSTTCLFWAKKKYKEVIAVSFDYNQKHKLELDCAKDICKKYNIEHHILDLNLLNQLAPNSLTRQDITVDKSAPKEGVPNSFVDGRNLLFLSFVAVFAKQKGINTIITGVSQSDFSGYPDCRDVFIKSLNVTLNLAMDYEFEIITPLMWINKAETWKMAYDLGVLDIVKEETLTCYNGIKADGCGECPACKLRKKGYWEFEKYLMN.

10–20 (FSGGQDSTTCL) is a binding site for ATP. The Zn(2+) site is built by Cys188, Cys197, Cys200, and Cys203.

Belongs to the QueC family. In terms of assembly, homodimer. It depends on Zn(2+) as a cofactor.

The enzyme catalyses 7-carboxy-7-deazaguanine + NH4(+) + ATP = 7-cyano-7-deazaguanine + ADP + phosphate + H2O + H(+). Its pathway is purine metabolism; 7-cyano-7-deazaguanine biosynthesis. Functionally, catalyzes the ATP-dependent conversion of 7-carboxy-7-deazaguanine (CDG) to 7-cyano-7-deazaguanine (preQ(0)). The polypeptide is 7-cyano-7-deazaguanine synthase (Clostridium botulinum (strain Kyoto / Type A2)).